Here is an 863-residue protein sequence, read N- to C-terminus: DNA replication licensing factor mcm4-B (863 aa).

Positions 1-130 (MSSPTSTPSR…ARKVKQVDLH (130 aa)) are disordered. Composition is skewed to polar residues over residues 54–64 (SPSGDVQSPSG) and 84–99 (LDLS…SSRV). The C4-type zinc-finger motif lies at 306 to 331 (CQVCAFTTRVEIDRGRIAEPSVCKHC). The region spanning 458–667 (IYERLAAALA…YDRRLAHHLV (210 aa)) is the MCM domain. Positions 471, 497, 516, 517, 618, 643, 732, and 735 each coordinate ATP. An Arginine finger motif is present at residues 642-645 (SRFD).

The protein belongs to the MCM family. In terms of assembly, component of the mcm2-7 complex (RLF-M). The complex forms a toroidal hexameric ring with the proposed subunit order mcm2-mcm6-mcm4-mcm7-mcm3-mcm5. The heterodimer of mmcm3/mcm5 interacts with mcm4, mmcm6, mcm7 and weakly with mcm2. Begins to associate with zmcm6 at the neurula stage. Component of the CMG helicase complex, composed of the mcm2-7 complex, the GINS complex and cdc45. In terms of processing, hyperphosphorylated during mitosis in a mechanism requiring cdc2-cyclin B and other kinases. Undergoes dephosphorylation after exiting mitosis, existing in a partially phosphorylated state in the cytosolic interphase mcm complex which associates with the pre-replication complexes (pre-Rcs). Complete dephosphorylation inactivates the mcm complex, preventing its binding to chromatin. Becomes actively phosphorylated during S phase once the mcm complex is assembled on the chromatin. This chromatin-associated phosphorylation occurs during the activation of the pre-Rcs and is independent of cdks. Phosphorylated by the cdc7-dbf4b complex.

It is found in the nucleus. The protein resides in the chromosome. It catalyses the reaction ATP + H2O = ADP + phosphate + H(+). Acts as a component of the MCM2-7 complex (MCM complex) which is the replicative helicase essential for 'once per cell cycle' DNA replication initiation and elongation in eukaryotic cells. Core component of CDC45-MCM-GINS (CMG) helicase, the molecular machine that unwinds template DNA during replication, and around which the replisome is built. The active ATPase sites in the MCM2-7 ring are formed through the interaction surfaces of two neighboring subunits such that a critical structure of a conserved arginine finger motif is provided in trans relative to the ATP-binding site of the Walker A box of the adjacent subunit. The six ATPase active sites, however, are likely to contribute differentially to the complex helicase activity. This is DNA replication licensing factor mcm4-B (mcm4-b) from Xenopus laevis (African clawed frog).